The chain runs to 37 residues: Cytochrome b6-f complex subunit 5 (37 aa).

Residues 5-25 (FLFGIVLGLIPITLAGLFVTA) traverse the membrane as a helical segment.

This sequence belongs to the PetG family. As to quaternary structure, the 4 large subunits of the cytochrome b6-f complex are cytochrome b6, subunit IV (17 kDa polypeptide, PetD), cytochrome f and the Rieske protein, while the 4 small subunits are PetG, PetL, PetM and PetN. The complex functions as a dimer.

The protein resides in the plastid. The protein localises to the chloroplast thylakoid membrane. In terms of biological role, component of the cytochrome b6-f complex, which mediates electron transfer between photosystem II (PSII) and photosystem I (PSI), cyclic electron flow around PSI, and state transitions. PetG is required for either the stability or assembly of the cytochrome b6-f complex. In Solanum lycopersicum (Tomato), this protein is Cytochrome b6-f complex subunit 5.